The sequence spans 89 residues: Large ribosomal subunit protein eL34 (89 aa).

The disordered stretch occupies residues 1-22 (MPAPRYKSGSSKKVYRKAPGNS).

This sequence belongs to the eukaryotic ribosomal protein eL34 family.

The sequence is that of Large ribosomal subunit protein eL34 from Methanococcus maripaludis (strain C5 / ATCC BAA-1333).